A 185-amino-acid chain; its full sequence is Elongation factor P (185 aa).

It belongs to the elongation factor P family.

The protein resides in the cytoplasm. Its pathway is protein biosynthesis; polypeptide chain elongation. Involved in peptide bond synthesis. Stimulates efficient translation and peptide-bond synthesis on native or reconstituted 70S ribosomes in vitro. Probably functions indirectly by altering the affinity of the ribosome for aminoacyl-tRNA, thus increasing their reactivity as acceptors for peptidyl transferase. This chain is Elongation factor P, found in Synechococcus sp. (strain JA-3-3Ab) (Cyanobacteria bacterium Yellowstone A-Prime).